The chain runs to 200 residues: Small ribosomal subunit protein eS1 (200 aa).

The protein belongs to the eukaryotic ribosomal protein eS1 family.

This is Small ribosomal subunit protein eS1 from Thermococcus gammatolerans (strain DSM 15229 / JCM 11827 / EJ3).